Reading from the N-terminus, the 352-residue chain is Schlafen-like protein 4 (352 aa).

Residues 87 to 235 form an SLFN-like fold region; it reads FEYQSNFSEV…SDKVYQISSG (149 aa). The helical transmembrane segment at 326–343 threads the bilayer; sequence IQNIGWIFFGTALSCCIY.

Belongs to the Schlafen family. In terms of assembly, component of the PUCH (precursor of 21U RNA 5'-end cleavage holoenzyme) complex; consisting of tofu-1, tofu-2 and either slfl-3 or slfl-4.

It is found in the membrane. Its function is as follows. Component of the trimeric PUCH (precursor of 21U RNA 5'-end cleavage holoenzyme) complex, that acts as an endoribonuclease processing the 5'-end of precursor Piwi-interacting RNAs (piRNAs). The PUCH complex consists of tofu-1, tofu-2 and either slfl-3 or slfl-4, where tofu-2 exhibits endoribonuclease activity. PUCH-mediated processing strictly requires a 7-methyl-G cap (m7 G-cap) and an uracil at position three (U3). PUCH also exhibits a strict bias for piRNA precursors with an A or G at position 1. Mature piRNA production is enhanced by the interaction of PUCH with the PETISCO complex, which is stabilizing piRNA precursors and allows their processing by PUCH. This is Schlafen-like protein 4 from Caenorhabditis elegans.